Reading from the N-terminus, the 570-residue chain is Sulfite reductase [NADPH] hemoprotein beta-component (570 aa).

Residues cysteine 434, cysteine 440, cysteine 479, and cysteine 483 each contribute to the [4Fe-4S] cluster site. Cysteine 483 is a siroheme binding site.

The protein belongs to the nitrite and sulfite reductase 4Fe-4S domain family. As to quaternary structure, alpha(8)-beta(8). The alpha component is a flavoprotein, the beta component is a hemoprotein. The cofactor is siroheme. It depends on [4Fe-4S] cluster as a cofactor.

The catalysed reaction is hydrogen sulfide + 3 NADP(+) + 3 H2O = sulfite + 3 NADPH + 4 H(+). It participates in sulfur metabolism; hydrogen sulfide biosynthesis; hydrogen sulfide from sulfite (NADPH route): step 1/1. Its function is as follows. Component of the sulfite reductase complex that catalyzes the 6-electron reduction of sulfite to sulfide. This is one of several activities required for the biosynthesis of L-cysteine from sulfate. In Salmonella heidelberg (strain SL476), this protein is Sulfite reductase [NADPH] hemoprotein beta-component.